A 457-amino-acid chain; its full sequence is MPLSLPLHIVILAAGEGKRMKSALPKVLHPIAGKPMLAHVITAAQALTPDAIHVVYGHAGNQVRAAFADQTDLHWVEQAQQLGTGHAVKQTMSAIPNAANVLVLYGDVPLIRAETLKRLPRASTPIAVLVTELANPAGYGHIVRNSEGKVAAIIEDKDADEEQRRIHTVNTGILCAESTALRRWLSKLSNTNMQGEYYLTDIFASATADLTPANMIMVTDAREVEGVNDLWQLTQLERAWQIRAARALCLQGARVADPARLDQRGTIRIGQNVHIDIDVVLEGEIELGDNVVIGPFVRLKNVKLGPGTKVHAHCDLEGVTTTGSALIGPFARLRPGTMLADGVHIGNFVETKNTSIGADSKANHLTYLGDAQIGTKVNIGAGTITCNYDGINKSITLIGDGAFIGSHSALIAPVSVGAGATLGAGTVLTHDAPAHQLTVARSRQTTLDSWQRPKKKT.

Positions 1–230 (MPLSLPLHIV…AREVEGVNDL (230 aa)) are pyrophosphorylase. Residues 12–15 (LAAG), Lys26, Gln78, 83–84 (GT), 105–107 (YGD), Gly140, Glu155, Asn170, and Asn228 each bind UDP-N-acetyl-alpha-D-glucosamine. Asp107 lines the Mg(2+) pocket. Position 228 (Asn228) interacts with Mg(2+). The segment at 231-251 (WQLTQLERAWQIRAARALCLQ) is linker. An N-acetyltransferase region spans residues 252–457 (GARVADPARL…DSWQRPKKKT (206 aa)). 2 residues coordinate UDP-N-acetyl-alpha-D-glucosamine: Arg334 and Lys352. Catalysis depends on His364, which acts as the Proton acceptor. Residues Tyr367 and Asn378 each coordinate UDP-N-acetyl-alpha-D-glucosamine. Residues Ala381, 387–388 (NY), Ser406, Ala424, and Arg441 each bind acetyl-CoA.

It in the N-terminal section; belongs to the N-acetylglucosamine-1-phosphate uridyltransferase family. The protein in the C-terminal section; belongs to the transferase hexapeptide repeat family. In terms of assembly, homotrimer. Mg(2+) is required as a cofactor.

The protein resides in the cytoplasm. It carries out the reaction alpha-D-glucosamine 1-phosphate + acetyl-CoA = N-acetyl-alpha-D-glucosamine 1-phosphate + CoA + H(+). It catalyses the reaction N-acetyl-alpha-D-glucosamine 1-phosphate + UTP + H(+) = UDP-N-acetyl-alpha-D-glucosamine + diphosphate. Its pathway is nucleotide-sugar biosynthesis; UDP-N-acetyl-alpha-D-glucosamine biosynthesis; N-acetyl-alpha-D-glucosamine 1-phosphate from alpha-D-glucosamine 6-phosphate (route II): step 2/2. It participates in nucleotide-sugar biosynthesis; UDP-N-acetyl-alpha-D-glucosamine biosynthesis; UDP-N-acetyl-alpha-D-glucosamine from N-acetyl-alpha-D-glucosamine 1-phosphate: step 1/1. It functions in the pathway bacterial outer membrane biogenesis; LPS lipid A biosynthesis. Functionally, catalyzes the last two sequential reactions in the de novo biosynthetic pathway for UDP-N-acetylglucosamine (UDP-GlcNAc). The C-terminal domain catalyzes the transfer of acetyl group from acetyl coenzyme A to glucosamine-1-phosphate (GlcN-1-P) to produce N-acetylglucosamine-1-phosphate (GlcNAc-1-P), which is converted into UDP-GlcNAc by the transfer of uridine 5-monophosphate (from uridine 5-triphosphate), a reaction catalyzed by the N-terminal domain. This Xylella fastidiosa (strain 9a5c) protein is Bifunctional protein GlmU.